We begin with the raw amino-acid sequence, 78 residues long: uncharacterized protein (78 aa).

Over residues Glu-56–Glu-66 the composition is skewed to basic and acidic residues. Positions Glu-56–Asp-78 are disordered.

This is an uncharacterized protein from Saccharomyces cerevisiae (strain ATCC 204508 / S288c) (Baker's yeast).